The sequence spans 950 residues: MAVVNTKNYQKVVEKVLSSSKANKALKSAIKDLSSSNSISLRTILLGAKFILTHPVNTYNLVKLAKSSNIYLDPEFQKSLLENSPIWEFLKKHSDDLPKIGRILAKAGFREFQDKSALDEEGLKILKECFKNEKVLKKLQDIAIEVKQERTDWNKVTSNILDMLVTDKNFQKFFNEKSKDITHYIRSGATEILPSDYMKSFDDILQKPEKKKLLKIFNTHPDVKQELVNNINNPNILKKFNKLFYKQEIMLTSFLKEVKAQSKPFLQEHFESYKIDLKILDIIPTLLNKIPDIKEIFDTLNAPNKGVMISLEKALEMVAGDDQLKSFFANNKTILPNMALGIIENTPSVQSITNEYNFDQQMLVIVGEVMSKPEIAHEIIADLNKGDYMSLTGNIISIINDPSFKLKDILVEQSKKGLFDNLINGVLEQDIKNSQIIKQQLINYGMEAGDVTKLTKIMPILLDKPESLKKVFRDFIKGNYTKMTKELISLTKDNPKIKEYLNNNRAIFASILDKTLMDIPGINNLDKQELYNILPSMLNHPDELIKVIEEVEKSHYHGAVSAIYNLAQKTNYFEGQLPNIIKAGFNSGFNYATEKVKDVFSSSRDFKDKVIDEITIRKHLDKIQNGKFNLEGAILLGNLSNIDFSGVSLKNADLTKVTSLKDCNFKNTNLVDAKLPDNLIMFTDTYNLDKAIPTLAPRLIKAQQAKLVDKAIDKVFVQIKAEEKKILFSKKEFLQQVKILLEENQTVKDYIIDKLNSFPMNMVTNLETPKINQYKHITNHVNSPFQILNPLYENIANQQDIKSNLFANILSEKISKKLFDKGDNRGEDFYLINQMLKSIVAEYSKPNNNIDNFLEHKNLEKLASNIASTLYSKSKYTLVGTITSGIYLPKEIFNEQLKDNFKNEFNKIIDVLKEAKNIVSNLESKVHIVDNQNKSHAYKLLLAKNKKIHR.

This is an uncharacterized protein from Rickettsia prowazekii (strain Madrid E).